Consider the following 108-residue polypeptide: MIISTTDKIPGYKIKEITGIVMGNIVHSKHLGKDIAAAFKTLAGGEIKSYTEMMTEARNKAIERMIDEAEKLGADAIVSVRFSSSAIMSGAAEILVYGTAVKLLPKDI.

It belongs to the UPF0145 family.

The polypeptide is UPF0145 protein Tmel_1129 (Thermosipho melanesiensis (strain DSM 12029 / CIP 104789 / BI429)).